Reading from the N-terminus, the 34-residue chain is Photosystem II reaction center protein M (34 aa).

The chain crosses the membrane as a helical span at residues 5-25 (ILAFIATALFILVPTAFLLII).

Belongs to the PsbM family. PSII is composed of 1 copy each of membrane proteins PsbA, PsbB, PsbC, PsbD, PsbE, PsbF, PsbH, PsbI, PsbJ, PsbK, PsbL, PsbM, PsbT, PsbX, PsbY, PsbZ, Psb30/Ycf12, at least 3 peripheral proteins of the oxygen-evolving complex and a large number of cofactors. It forms dimeric complexes.

The protein localises to the plastid. Its subcellular location is the chloroplast thylakoid membrane. Its function is as follows. One of the components of the core complex of photosystem II (PSII). PSII is a light-driven water:plastoquinone oxidoreductase that uses light energy to abstract electrons from H(2)O, generating O(2) and a proton gradient subsequently used for ATP formation. It consists of a core antenna complex that captures photons, and an electron transfer chain that converts photonic excitation into a charge separation. This subunit is found at the monomer-monomer interface. This chain is Photosystem II reaction center protein M, found in Phaseolus vulgaris (Kidney bean).